Consider the following 145-residue polypeptide: D-aminoacyl-tRNA deacylase (145 aa).

The short motif at 137 to 138 (GP) is the Gly-cisPro motif, important for rejection of L-amino acids element.

It belongs to the DTD family. In terms of assembly, homodimer.

Its subcellular location is the cytoplasm. The enzyme catalyses glycyl-tRNA(Ala) + H2O = tRNA(Ala) + glycine + H(+). It carries out the reaction a D-aminoacyl-tRNA + H2O = a tRNA + a D-alpha-amino acid + H(+). In terms of biological role, an aminoacyl-tRNA editing enzyme that deacylates mischarged D-aminoacyl-tRNAs. Also deacylates mischarged glycyl-tRNA(Ala), protecting cells against glycine mischarging by AlaRS. Acts via tRNA-based rather than protein-based catalysis; rejects L-amino acids rather than detecting D-amino acids in the active site. By recycling D-aminoacyl-tRNA to D-amino acids and free tRNA molecules, this enzyme counteracts the toxicity associated with the formation of D-aminoacyl-tRNA entities in vivo and helps enforce protein L-homochirality. The sequence is that of D-aminoacyl-tRNA deacylase from Photorhabdus laumondii subsp. laumondii (strain DSM 15139 / CIP 105565 / TT01) (Photorhabdus luminescens subsp. laumondii).